Here is a 333-residue protein sequence, read N- to C-terminus: Glycerol-3-phosphate dehydrogenase [NAD(P)+] (333 aa).

NADPH-binding residues include serine 10, tryptophan 11, histidine 31, arginine 32, and lysine 105. Positions 105, 136, and 138 each coordinate sn-glycerol 3-phosphate. Alanine 140 contributes to the NADPH binding site. The sn-glycerol 3-phosphate site is built by lysine 191, aspartate 244, serine 254, arginine 255, and asparagine 256. Lysine 191 (proton acceptor) is an active-site residue. Arginine 255 is a binding site for NADPH. Positions 279 and 281 each coordinate NADPH.

This sequence belongs to the NAD-dependent glycerol-3-phosphate dehydrogenase family.

Its subcellular location is the cytoplasm. It carries out the reaction sn-glycerol 3-phosphate + NAD(+) = dihydroxyacetone phosphate + NADH + H(+). The enzyme catalyses sn-glycerol 3-phosphate + NADP(+) = dihydroxyacetone phosphate + NADPH + H(+). Its pathway is membrane lipid metabolism; glycerophospholipid metabolism. Functionally, catalyzes the reduction of the glycolytic intermediate dihydroxyacetone phosphate (DHAP) to sn-glycerol 3-phosphate (G3P), the key precursor for phospholipid synthesis. This is Glycerol-3-phosphate dehydrogenase [NAD(P)+] from Pelodictyon phaeoclathratiforme (strain DSM 5477 / BU-1).